The primary structure comprises 121 residues: Large ribosomal subunit protein bL12 (121 aa).

Belongs to the bacterial ribosomal protein bL12 family. As to quaternary structure, homodimer. Part of the ribosomal stalk of the 50S ribosomal subunit. Forms a multimeric L10(L12)X complex, where L10 forms an elongated spine to which 2 to 4 L12 dimers bind in a sequential fashion. Binds GTP-bound translation factors.

Its function is as follows. Forms part of the ribosomal stalk which helps the ribosome interact with GTP-bound translation factors. Is thus essential for accurate translation. This is Large ribosomal subunit protein bL12 from Shewanella halifaxensis (strain HAW-EB4).